The sequence spans 677 residues: Levanase (677 aa).

Positions 1-24 are cleaved as a signal peptide; the sequence is MKKRLIQVMIMFTLLLTMAFSADA. Residues 46–49, Gln65, Trp73, 105–106, 171–172, Glu223, and Trp313 contribute to the substrate site; these read WMND, FS, and RD. Asp49 is a catalytic residue.

Belongs to the glycosyl hydrolase 32 family.

Its subcellular location is the secreted. The enzyme catalyses Hydrolysis of terminal, non-reducing (2-&gt;1)- and (2-&gt;6)-linked beta-D-fructofuranose residues in fructans.. Its activity is regulated as follows. Is completely inhibited by Ag(+) and Hg(2+) ions. In terms of biological role, exo-fructosidase that can hydrolyze both levan and inulin, leading to the production of free fructose. Is also able to hydrolyze sucrose and to a small extent raffinose, but not melezitose, stachylose, cellobiose, maltose, and lactose. The sequence is that of Levanase (sacC) from Bacillus subtilis (strain 168).